The chain runs to 1411 residues: Zinc finger protein 609 (1411 aa).

8 disordered regions span residues M1 to E26, Q47 to P190, P353 to V484, A517 to I659, A679 to Q963, Y1005 to E1125, K1153 to H1221, and G1270 to H1367. S358, S361, and S379 each carry phosphoserine. The segment covering P377–T401 has biased composition (polar residues). At T381 the chain carries Phosphothreonine. Phosphoserine is present on residues S413, S433, S446, S452, S467, and S470. Positions A423–A437 are enriched in polar residues. A Glycyl lysine isopeptide (Lys-Gly) (interchain with G-Cter in SUMO2) cross-link involves residue K479. The C2H2-type zinc-finger motif lies at I495–H520. Residues A519–A529 are compositionally biased toward basic and acidic residues. Position 533 is a phosphoserine (S533). The span at N549–R563 shows a compositional bias: polar residues. A phosphoserine mark is found at S576 and S578. A compositionally biased stretch (basic and acidic residues) spans S626–P649. A compositionally biased stretch (polar residues) spans A679–Q700. A compositionally biased stretch (basic residues) spans D726–E736. A Phosphoserine modification is found at S743. T746 is subject to Phosphothreonine. Basic and acidic residues predominate over residues C751–S764. S758 is modified (phosphoserine). A Glycyl lysine isopeptide (Lys-Gly) (interchain with G-Cter in SUMO2) cross-link involves residue K789. The segment covering F798–A844 has biased composition (polar residues). S804 is subject to Phosphoserine. T823 carries the phosphothreonine modification. 3 positions are modified to phosphoserine: S842, S846, and S849. Over residues G855 to K876 the composition is skewed to basic and acidic residues. Low complexity predominate over residues S897–P908. A compositionally biased stretch (basic and acidic residues) spans T926–E950. Low complexity predominate over residues S952 to Q963. Over residues G1020–Q1042 the composition is skewed to basic and acidic residues. S1055 is subject to Phosphoserine. K1061 participates in a covalent cross-link: Glycyl lysine isopeptide (Lys-Gly) (interchain with G-Cter in SUMO2). 3 stretches are compositionally biased toward basic and acidic residues: residues L1097–E1113, K1153–T1187, and T1195–P1208. K1153 is covalently cross-linked (Glycyl lysine isopeptide (Lys-Gly) (interchain with G-Cter in SUMO2)). Positions P1286–S1296 are enriched in polar residues. A Glycyl lysine isopeptide (Lys-Gly) (interchain with G-Cter in SUMO2) cross-link involves residue K1297. The segment covering G1328 to S1337 has biased composition (gly residues).

As to quaternary structure, interacts (via N-terminus) with NIPBL. Interacts with INTS13; promoting association with the integrator complex. In terms of tissue distribution, isoform 1: Expressed in myoblasts and myotubes. Isoform 2: Expressed in myoblasts and myotubes, with a preference in undifferentiated myoblasts.

The protein localises to the nucleus. Functionally, transcription factor, which activates RAG1, and possibly RAG2, transcription. Through the regulation of RAG1/2 expression, may regulate thymocyte maturation. Along with NIPBL and the multiprotein complex Integrator, promotes cortical neuron migration during brain development by regulating the transcription of crucial genes in this process. Preferentially binds promoters containing paused RNA polymerase II. Up-regulates the expression of SEMA3A, NRP1, PLXND1 and GABBR2 genes, among others. Its function is as follows. Involved in the regulation of myoblast proliferation during myogenesis. In Homo sapiens (Human), this protein is Zinc finger protein 609.